Reading from the N-terminus, the 537-residue chain is Protein pns1 (537 aa).

Positions 1 to 16 (MSGQAASYYNPSQSYG) are enriched in polar residues. The interval 1–35 (MSGQAASYYNPSQSYGDFQPGMQNPQQQPDYYNNN) is disordered. At 1–81 (MSGQAASYYN…FKIERPKYHD (81 aa)) the chain is on the cytoplasmic side. Positions 23–35 (QNPQQQPDYYNNN) are enriched in low complexity. Residues 82–102 (IWAGLLFIAVFLGYVAVSGVA) traverse the membrane as a helical segment. Residues 103 to 130 (IHRYAKYKGLNGDGIYDSSNSFSLDTNT) lie on the Extracellular side of the membrane. Residues 131–151 (LILFIFVLCVALAFSYAYFLG) form a helical membrane-spanning segment. The Cytoplasmic portion of the chain corresponds to 152–158 (ARYFSKL). The chain crosses the membrane as a helical span at residues 159 to 179 (FIWVTGILNIVFALATGIYYI). At 180–184 (ARKQY) the chain is on the extracellular side. Residues 185-205 (GGGIVFLLFGVFAIICFISWI) traverse the membrane as a helical segment. The Cytoplasmic segment spans residues 206-227 (PRIPFSAFMLQTSIDVSRKYGH). The helical transmembrane segment at 228–248 (MFIVSTIGGLVAVAFAAWFSV) threads the bilayer. The Extracellular portion of the chain corresponds to 249–275 (TLVSIYVAYEPSSSGSNPSCSDGGCSR). Residues 276–296 (ARVIGLVVYVTFAMYWFSEWL) traverse the membrane as a helical segment. The Cytoplasmic portion of the chain corresponds to 297-333 (KNTIHTTIAGVYGSWYFWSQSPNGMPRGSTRGAFRRA). Residues 334–354 (TTYSFGSVSFGSLIIAIINML) form a helical membrane-spanning segment. Topologically, residues 355–370 (RQACSVAQRNEAAEGS) are extracellular. Residues 371 to 391 (IVGSIMFWILGCFIAILDWLV) traverse the membrane as a helical segment. Over 392-432 (TLFNRYAFCHIALYGKAYIPAAKDTWTMMRDRGIDALVNDC) the chain is Cytoplasmic. A helical membrane pass occupies residues 433–453 (LIGPVLTMGSVFVSYVCALLA). Residues 454-469 (YLYLQFTKPSYNADGN) lie on the Extracellular side of the membrane. A glycan (N-linked (GlcNAc...) asparagine) is linked at Asn-469. The chain crosses the membrane as a helical span at residues 470–490 (FTAVIMAFAFVIGLQICQIFM). Topologically, residues 491 to 537 (TPVSSGIETIFVAMGWDPQVMIRDHPDLYYRMIQVYPRVQQAIQPSA) are cytoplasmic.

This sequence belongs to the CTL (choline transporter-like) family.

It is found in the cell membrane. Its function is as follows. Probably involved in transport through the plasma membrane. The polypeptide is Protein pns1 (pns1) (Aspergillus fumigatus (strain ATCC MYA-4609 / CBS 101355 / FGSC A1100 / Af293) (Neosartorya fumigata)).